A 404-amino-acid polypeptide reads, in one-letter code: Formate-dependent phosphoribosylglycinamide formyltransferase (404 aa).

N(1)-(5-phospho-beta-D-ribosyl)glycinamide-binding positions include 25–26 and Glu85; that span reads EL. ATP is bound by residues Arg118, Lys159, 164–169, 199–202, and Glu207; these read SSGKGQ and EGFI. Residues 123-318 enclose the ATP-grasp domain; that stretch reads RLAAEELGLP…EFELHARAIL (196 aa). Residues Glu277 and Glu289 each coordinate Mg(2+). Residues Asp296, Lys365, and 372 to 373 each bind N(1)-(5-phospho-beta-D-ribosyl)glycinamide; that span reads RR.

This sequence belongs to the PurK/PurT family. Homodimer.

It carries out the reaction N(1)-(5-phospho-beta-D-ribosyl)glycinamide + formate + ATP = N(2)-formyl-N(1)-(5-phospho-beta-D-ribosyl)glycinamide + ADP + phosphate + H(+). Its pathway is purine metabolism; IMP biosynthesis via de novo pathway; N(2)-formyl-N(1)-(5-phospho-D-ribosyl)glycinamide from N(1)-(5-phospho-D-ribosyl)glycinamide (formate route): step 1/1. Functionally, involved in the de novo purine biosynthesis. Catalyzes the transfer of formate to 5-phospho-ribosyl-glycinamide (GAR), producing 5-phospho-ribosyl-N-formylglycinamide (FGAR). Formate is provided by PurU via hydrolysis of 10-formyl-tetrahydrofolate. This is Formate-dependent phosphoribosylglycinamide formyltransferase from Burkholderia pseudomallei (strain 1106a).